The following is a 359-amino-acid chain: MANVLVAMSGGVDSSLAAALLQEAGHQVTGVTMHLWDDDEQGLRESLCCAAEAATSARRVCALLGIPFYVFNYQREFRRHVIEYFIRAYTHGLTPNPCVECNRMIKFRALLDRARALGFDAVATGHYARIVRDDCGRYQLWRAVDTEKDQSYMLHMLGQADLARLLFPIGEYTKQQVREMAAARCLPSANREESQDICFVPDGDYRNLLRIEAPESLIPGPIVDLEGREIGRHRGLPLYTVGQRRGLGLGGGEPRYVVAIDPARNALIVGPVEALNRERFIVTDARWVDDAPPAETFHCQVQVRAHAEPLPARVSAQPDGRWLVELERPQRAVSPGQAAVFYDGVRVLGGGWIARPEVG.

Residues Ala7 to Ser14 and Met33 contribute to the ATP site. Residue Cys101 is the Nucleophile of the active site. A disulfide bond links Cys101 and Cys198. Residue Gly125 coordinates ATP. Residues Lys148–Gln150 form an interaction with tRNA region. Cys198 (cysteine persulfide intermediate) is an active-site residue.

It belongs to the MnmA/TRMU family.

It localises to the cytoplasm. It carries out the reaction S-sulfanyl-L-cysteinyl-[protein] + uridine(34) in tRNA + AH2 + ATP = 2-thiouridine(34) in tRNA + L-cysteinyl-[protein] + A + AMP + diphosphate + H(+). Catalyzes the 2-thiolation of uridine at the wobble position (U34) of tRNA, leading to the formation of s(2)U34. The chain is tRNA-specific 2-thiouridylase MnmA from Chloroflexus aggregans (strain MD-66 / DSM 9485).